The chain runs to 310 residues: N-acetyl-gamma-glutamyl-phosphate reductase (310 aa).

The active site involves cysteine 117.

This sequence belongs to the NAGSA dehydrogenase family. Type 2 subfamily.

The protein localises to the cytoplasm. The enzyme catalyses N-acetyl-L-glutamate 5-semialdehyde + phosphate + NADP(+) = N-acetyl-L-glutamyl 5-phosphate + NADPH + H(+). Its pathway is amino-acid biosynthesis; L-arginine biosynthesis; N(2)-acetyl-L-ornithine from L-glutamate: step 3/4. Functionally, catalyzes the NADPH-dependent reduction of N-acetyl-5-glutamyl phosphate to yield N-acetyl-L-glutamate 5-semialdehyde. This chain is N-acetyl-gamma-glutamyl-phosphate reductase, found in Rhizobium meliloti (strain 1021) (Ensifer meliloti).